The primary structure comprises 128 residues: Azurin (128 aa).

Residues 1-128 (AECKTTIDST…SMMKGTVTLK (128 aa)) form the Plastocyanin-like domain. An intrachain disulfide couples Cys-3 to Cys-26. Residues His-46, Cys-112, His-117, and Met-121 each contribute to the Cu cation site.

Its subcellular location is the periplasm. In terms of biological role, transfers electrons from cytochrome c551 to cytochrome oxidase. The sequence is that of Azurin from Pseudomonas fluorescens biotype B.